The primary structure comprises 326 residues: Biotin synthase (326 aa).

One can recognise a Radical SAM core domain in the interval 51–278; the sequence is NRVQVSRLIS…KSFVRLSAGR (228 aa). Cys66, Cys70, and Cys73 together coordinate [4Fe-4S] cluster. Cys110, Cys141, Cys201, and Arg273 together coordinate [2Fe-2S] cluster.

Belongs to the radical SAM superfamily. Biotin synthase family. As to quaternary structure, homodimer. [4Fe-4S] cluster serves as cofactor. Requires [2Fe-2S] cluster as cofactor.

It carries out the reaction (4R,5S)-dethiobiotin + (sulfur carrier)-SH + 2 reduced [2Fe-2S]-[ferredoxin] + 2 S-adenosyl-L-methionine = (sulfur carrier)-H + biotin + 2 5'-deoxyadenosine + 2 L-methionine + 2 oxidized [2Fe-2S]-[ferredoxin]. It functions in the pathway cofactor biosynthesis; biotin biosynthesis; biotin from 7,8-diaminononanoate: step 2/2. Functionally, catalyzes the conversion of dethiobiotin (DTB) to biotin by the insertion of a sulfur atom into dethiobiotin via a radical-based mechanism. The sequence is that of Biotin synthase from Paramagnetospirillum magneticum (strain ATCC 700264 / AMB-1) (Magnetospirillum magneticum).